The primary structure comprises 583 residues: Ras-specific guanine nucleotide-releasing factor RalGPS2 (583 aa).

The region spanning 49–287 (TPEEYAGQIT…YKLSLKIEPG (239 aa)) is the Ras-GEF domain. Residues 283–314 (KIEPGTSTPRSAASREDLVGPEVGASPQSGRK) are disordered. Phosphoserine occurs at positions 293, 296, 308, and 311. Residues 324-327 (PQTP) carry the PXXP motif. Position 326 is a phosphothreonine (T326). S329 and S343 each carry phosphoserine. T361 is subject to Phosphothreonine. The tract at residues 372–406 (DDSVMEPHAPSRGQAESSTLSSGISIGSSDGSELS) is disordered. S374 carries the post-translational modification Phosphoserine. Positions 387 to 403 (ESSTLSSGISIGSSDGS) are enriched in low complexity. Position 422 is a phosphoserine (S422). Positions 457 to 569 (AVTIQGVLRR…WFKHLSAACQ (113 aa)) constitute a PH domain. The interval 459-583 (TIQGVLRRKT…QVPTNLMTFE (125 aa)) is required for stimulation of nucleotide exchange by RALA.

Interacts with the SH3 domains of GRB2 and PLCG1. Interacts with RALA.

Its subcellular location is the cytoplasm. It localises to the cell membrane. Its function is as follows. Guanine nucleotide exchange factor for the small GTPase RALA. May be involved in cytoskeletal organization. May also be involved in the stimulation of transcription in a Ras-independent fashion. The polypeptide is Ras-specific guanine nucleotide-releasing factor RalGPS2 (RALGPS2) (Homo sapiens (Human)).